A 337-amino-acid chain; its full sequence is Biotin synthase (337 aa).

One can recognise a Radical SAM core domain in the interval 55–284 (YFKNTIELCS…KKTILLAGGK (230 aa)). Residues Cys-73, Cys-77, and Cys-80 each coordinate [4Fe-4S] cluster. 3 residues coordinate [2Fe-2S] cluster: Cys-117, Cys-149, and Cys-209.

The protein belongs to the radical SAM superfamily. Biotin synthase family. In terms of assembly, homodimer. It depends on [4Fe-4S] cluster as a cofactor. Requires [2Fe-2S] cluster as cofactor.

It catalyses the reaction (4R,5S)-dethiobiotin + (sulfur carrier)-SH + 2 reduced [2Fe-2S]-[ferredoxin] + 2 S-adenosyl-L-methionine = (sulfur carrier)-H + biotin + 2 5'-deoxyadenosine + 2 L-methionine + 2 oxidized [2Fe-2S]-[ferredoxin]. Its pathway is cofactor biosynthesis; biotin biosynthesis; biotin from 7,8-diaminononanoate: step 2/2. Catalyzes the conversion of dethiobiotin (DTB) to biotin by the insertion of a sulfur atom into dethiobiotin via a radical-based mechanism. This chain is Biotin synthase, found in Caldicellulosiruptor bescii (strain ATCC BAA-1888 / DSM 6725 / KCTC 15123 / Z-1320) (Anaerocellum thermophilum).